Here is a 922-residue protein sequence, read N- to C-terminus: MKKKTYQFEKFLKNTFDQFSIKQNEVLVEDDLNDIIMNVCGKALVLMINEKREMNLLMGNTPEERYQYFENEYSSTGKAFEEIKDKFPVIYIDLKNSINSYLKLVSQIMKDFKKDYSLLVERKIIEEHSTISTMKIKGDLHNGKAVIEITTNKSKLIYKPKSLSNDVFFNNFLKYMDSFFIKEGKSTKYKENFYLVNTLDMKTYGWVEYVDKKPINSFEEARNYYRKIGVLLSVAYTLNLTDLHFENVISQGENPCIIDLETMFNMPMFVKDYKNESRNIINGKIMDSVVSTGMLPVLGIDSLFGGDPSGILGGTFSKEERVIINPFRDDIKFQKIVVRSVFKDHIPFFNNNNEKRYCKPKDYVNDIIKGFEKTYKIIVKNKEKILGFLKKESSSVTCRILFRNTMEYSVLLNAAKSPVYSNKREEIFEKLSTFNRGLGNDIIKSEISQINTLSIPYFNCQVDSNLIKNMDGETIFEHTLTPFKCFLSKYRRLCVDDMEQQVKLIRFSIQSQEQLFKDGEQFSLYKKQKGSQEDLLIAINELSSILENNAYIGTSDDTINWMSLGIADNDQILFESLENDIYKGISGIGLALLEYYEFYPNINTKKILKLIYKNISKDFINTNNEPQNYGFYVGLIGEYSFLRKYEKVFHKTSSCNILKNILKDFTPEKCQTILPSDDVIAGEAGIIIYISNLNNYLEYRDEIDILLKSLSNKIKLKESIASYAHGNSGIATAFVHGYKVTKNEKYLKIFHELWNLENSSKLRRGWTDSRKVDSSYSSQWCHGASGQAIARMEWITVNKTARFLSNSELIKVKKELGELIDILKKEGMYTDNFCLCHGILGNLLILNTYQENFDNKNINLKNEILNNYYSVCNYGLNKGWICGLGTEFYSYGLMTGISGILYGLIRQVKQKNNFGVLMPYVD.

Functionally, could be implicated in the processing or the export process of the lantibiotic lacticin 481/lactococcin DR. The chain is Lacticin 481/lactococcin biosynthesis protein LcnDR2 (lcnDR2) from Lactococcus lactis subsp. lactis (Streptococcus lactis).